We begin with the raw amino-acid sequence, 58 residues long: Weak neurotoxin D2B (58 aa).

Cystine bridges form between cysteine 3-cysteine 24, cysteine 17-cysteine 41, and cysteine 43-cysteine 54.

As to expression, expressed by the venom gland.

It is found in the secreted. Its function is as follows. Binds to muscle nicotinic acetylcholine receptor (nAChR) and inhibit acetylcholine from binding to the receptor, thereby impairing neuromuscular transmission. The sequence is that of Weak neurotoxin D2B from Micrurus pyrrhocryptus (Coral snake).